We begin with the raw amino-acid sequence, 973 residues long: Short transient receptor potential channel 5 (973 aa).

Over Met-1–Lys-325 the chain is Cytoplasmic. ANK repeat units follow at residues Ser-30–Asn-60, Leu-69–Gly-97, Asp-98–Glu-124, and Pro-141–Arg-170. 4 residues coordinate Zn(2+): His-172, Cys-176, Cys-178, and Cys-181. Positions His-326–Ile-360 form an intramembrane region, discontinuously helical. At Lys-361–Pro-363 the chain is on the cytoplasmic side. The chain crosses the membrane as a helical span at residues Phe-364 to Ala-384. The Extracellular segment spans residues Ser-385–Glu-404. A helical membrane pass occupies residues Trp-405–Ile-419. Residues Glu-418, Glu-421, Asn-436, and Asp-439 each contribute to the Ca(2+) site. Over Lys-420–Asp-433 the chain is Cytoplasmic. Residues Trp-434–Ile-454 traverse the membrane as a helical segment. Residues Val-455–Leu-476 lie on the Extracellular side of the membrane. N-linked (GlcNAc...) asparagine glycosylation occurs at Asn-461. Residues Ile-477–Phe-497 traverse the membrane as a helical segment. The Cytoplasmic segment spans residues Thr-498–Arg-512. The helical transmembrane segment at Met-513–Leu-535 threads the bilayer. Topologically, residues Asn-536–Thr-603 are extracellular. The cysteines at positions 553 and 558 are disulfide-linked. The chain crosses the membrane as a helical span at residues Met-604 to Met-624. Residues Asn-625–Leu-973 are Cytoplasmic-facing. Disordered stretches follow at residues His-766–Ser-794 and Gly-810–Phe-837. The essential for binding to NHERF1 PDZ domain stretch occupies residues Thr-971–Leu-973.

The protein belongs to the transient receptor (TC 1.A.4) family. STrpC subfamily. TRPC5 sub-subfamily. In terms of assembly, homotetramer. Heterotetramer with TRPC1 and/or TRPC4. Each subunit in the homomeric ion channel (via ANK repeats) interacts with one copy of GTP-bound GNAI3; the interaction is direct and activates the ion channel. Interacts with TRPC4AP. Interacts with NHERF1. Interacts with MX1 and RNF24. Interacts (via C-terminus) with CABP1. Interacts with SESTD1 (via the spectrin 1 repeat). Interacts with PLSCR1. Interacts with PKD2L2. In terms of tissue distribution, expressed in brain with higher levels in fetal brain. Found in cerebellum and occipital pole.

Its subcellular location is the cell membrane. The catalysed reaction is Ca(2+)(in) = Ca(2+)(out). Activated by G-protein coupled receptors via direct interaction with GTP-bound GNAI3, which increases the channel sensitivity to phosphatidylinositol bisphosphate. May be activated by intracellular calcium store depletion. Calcium channel activity is enhanced by MYLK, that promotes its subcellular localization at the plasma membrane. In terms of biological role, forms a receptor-activated non-selective calcium permeant cation channel. Mediates calcium-dependent phosphatidylserine externalization and apoptosis in neurons via its association with PLSCR1. Acts on distinct neuronal populations in the hypothalamus to regulate innate behaviors including feeding, anxiety (flight/fight/fear), socialization, and maternal care. This Homo sapiens (Human) protein is Short transient receptor potential channel 5 (TRPC5).